The following is a 56-amino-acid chain: Small ribosomal subunit protein uS14 (56 aa).

Residues C21, C24, C39, and C42 each coordinate Zn(2+).

It belongs to the universal ribosomal protein uS14 family. In terms of assembly, component of the 40S small ribosomal subunit. Zn(2+) serves as cofactor.

Its subcellular location is the cytoplasm. The protein resides in the cytosol. The protein localises to the rough endoplasmic reticulum. In Drosophila melanogaster (Fruit fly), this protein is Small ribosomal subunit protein uS14 (RpS29).